Here is a 283-residue protein sequence, read N- to C-terminus: MNAPQNSPEIGREIIAAGIRTNLHDSGAGFPLMMIHGSGPGVTAWANWRLVMPELAKSRRVIAPDMLGFGYSERPADAQYNRDVWVDHAVGVLDALEIEQADLVGNSFGGGIALALAIRHPERVRRLVLMGSAGVSFPITEGLDAVWGYNPSFAEMRRLLDIFAFDRNLVNDELAELRYQASIRPGFHESFAAMFPAPRQRWVDGLASAEAAIRALPHETLVIHGREDQIIPLQTSLTLADWIARAQLHVFGQCGHWTQIEHAARFASLVGDFLAEADAAAIS.

One can recognise an AB hydrolase-1 domain in the interval 32-262 (LMMIHGSGPG…QCGHWTQIEH (231 aa)). Residues Ser107, Asp228, and His256 contribute to the active site.

This sequence belongs to the DmpD/TodF/XylF esterase family.

It catalyses the reaction (2Z,4E)-2-hydroxy-6-oxohexa-2,4-dienoate + H2O = 2-oxopent-4-enoate + formate + H(+). It participates in aromatic compound metabolism; benzoate degradation via hydroxylation. Functionally, catalyzes the conversion of 2-hydroxymuconate semialdehyde to 2-hydroxypent-2,4-dienoate. This is 2-hydroxymuconate semialdehyde hydrolase (dmpD) from Pseudomonas sp. (strain CF600).